The primary structure comprises 2211 residues: Coagulation factor V (2211 aa).

An N-terminal signal peptide occupies residues methionine 1 to alanine 28. Plastocyanin-like domains are found at residues lysine 30 to cysteine 193, threonine 203 to lysine 327, lysine 348 to cysteine 525, and isoleucine 535 to alanine 686. F5/8 type A domains are found at residues lysine 30–lysine 327 and lysine 348–alanine 686. Ca(2+) is bound by residues aspartate 139 and aspartate 140. Residues cysteine 167 and cysteine 193 are joined by a disulfide bond. N-linked (GlcNAc...) asparagine glycosylation is found at asparagine 225, asparagine 239, asparagine 297, asparagine 382, and asparagine 460. Cysteine 248 and cysteine 329 form a disulfide bridge. An intrachain disulfide couples cysteine 499 to cysteine 525. N-linked (GlcNAc...) asparagine glycosylation is found at asparagine 553 and asparagine 587. Cysteine 607 and cysteine 688 are disulfide-bonded. Threonine 644 is subject to Phosphothreonine. The segment at serine 696–arginine 1564 is b. Sulfotyrosine is present on residues tyrosine 697, tyrosine 701, and tyrosine 730. The propeptide at serine 742–arginine 1564 is activation peptide (connecting region). N-linked (GlcNAc...) asparagine glycosylation is found at asparagine 745, asparagine 756, asparagine 774, and asparagine 780. Positions leucine 814–histidine 844 are disordered. N-linked (GlcNAc...) asparagine glycosylation is found at asparagine 902, asparagine 952, and asparagine 964. The segment covering threonine 954–tryptophan 969 has biased composition (polar residues). The segment at threonine 954–leucine 1039 is disordered. Residues proline 995 to glutamate 1009 show a composition bias toward basic and acidic residues. 6 N-linked (GlcNAc...) asparagine glycosylation sites follow: asparagine 1044, asparagine 1053, asparagine 1062, asparagine 1071, asparagine 1078, and asparagine 1094. Disordered regions lie at residues serine 1084 to tyrosine 1162 and glutamine 1195 to threonine 1471. 2 stretches are compositionally biased toward polar residues: residues threonine 1091 to proline 1103 and threonine 1127 to proline 1160. A run of 30 repeats spans residues serine 1124–serine 1137, proline 1138–serine 1151, alanine 1188–proline 1196, serine 1197–methionine 1205, alanine 1206–glutamate 1214, serine 1215–threonine 1223, serine 1224–glutamate 1232, serine 1233–threonine 1241, alanine 1242–glutamate 1250, serine 1251–threonine 1259, alanine 1260–glutamate 1268, serine 1269–threonine 1277, alanine 1278–glutamate 1286, serine 1287–threonine 1295, serine 1296–glutamate 1304, serine 1305–threonine 1313, alanine 1314–glutamate 1322, serine 1323–threonine 1331, alanine 1332–glutamate 1340, serine 1341–threonine 1349, serine 1350–glutamate 1358, serine 1359–threonine 1367, alanine 1368–glutamate 1376, serine 1377–threonine 1385, serine 1386–glutamate 1394, serine 1395–threonine 1403, alanine 1404–glutamate 1412, serine 1413–threonine 1421, proline 1422–glutamate 1430, and serine 1431–leucine 1439. Positions serine 1124–serine 1151 are 2 X 14 AA tandem repeats. The tract at residues alanine 1188–threonine 1453 is 30 X 9 AA approximate tandem repeats of [AS]-L-S-P-D-[LP]-[GS]-Q-[TE]. Polar residues-rich tracts occupy residues glutamate 1214–leucine 1234, threonine 1241–leucine 1252, threonine 1259–leucine 1270, glutamate 1286–leucine 1306, threonine 1313–leucine 1324, threonine 1331–serine 1352, threonine 1367–serine 1388, and threonine 1403–leucine 1414. A compositionally biased stretch (low complexity) spans proline 1422–leucine 1441. One copy of the 2-29; truncated repeat lies at aspartate 1440–threonine 1444. Residues lysine 1442–leucine 1463 are compositionally biased toward polar residues. Residues serine 1445–threonine 1453 form a 2-30 repeat. N-linked (GlcNAc...) asparagine glycans are attached at residues asparagine 1451 and asparagine 1490. Sulfotyrosine is present on residues tyrosine 1513, tyrosine 1529, tyrosine 1537, and tyrosine 1541. N-linked (GlcNAc...) asparagine glycosylation is found at asparagine 1550 and asparagine 1690. 2 consecutive Plastocyanin-like domains span residues asparagine 1569–cysteine 1738 and asparagine 1748–valine 1890. Residues asparagine 1569–valine 1890 form the F5/8 type A 3 domain. A disulfide bridge connects residues cysteine 1712 and cysteine 1738. The Cu cation site is built by histidine 1830 and histidine 1832. Asparagine 1839 is a glycosylation site (N-linked (GlcNAc...) asparagine). Aspartate 1872 contacts Cu cation. 2 disulfides stabilise this stretch: cysteine 1894/cysteine 2048 and cysteine 2053/cysteine 2208. 2 consecutive F5/8 type C domains span residues cysteine 1894–cysteine 2048 and cysteine 2053–cysteine 2208. 2 N-linked (GlcNAc...) asparagine glycosylation sites follow: asparagine 1997 and asparagine 2196.

The protein belongs to the multicopper oxidase family. In terms of assembly, factor Va, the activated form of factor V, is composed of a heavy chain and a light chain, non-covalently bound. The interaction between the two chains is calcium-dependent. Forms heterodimer with SERPINA5. Post-translationally, thrombin activates factor V proteolytically to the active cofactor, factor Va (formation of a heavy chain at the N-terminus and a light chain at the C-terminus). In terms of processing, sulfation is required for efficient thrombin cleavage and activation and for full procoagulant activity. Activated protein C inactivates factor V and factor Va by proteolytic degradation.

The protein localises to the secreted. Its activity is regulated as follows. Inhibited by SERPINA5. Its function is as follows. Central regulator of hemostasis. It serves as a critical cofactor for the prothrombinase activity of factor Xa that results in the activation of prothrombin to thrombin. The polypeptide is Coagulation factor V (F5) (Bos taurus (Bovine)).